The following is a 348-amino-acid chain: uncharacterized protein (348 aa).

This is an uncharacterized protein from Sulfolobus islandicus filamentous virus (isolate Iceland/Hveragerdi) (SIFV).